Consider the following 240-residue polypeptide: Flagellar L-ring protein (240 aa).

The signal sequence occupies residues 1–20 (MIRNFLLFFMPIYAILFLSG). Residue cysteine 21 is the site of N-palmitoyl cysteine attachment. Cysteine 21 carries S-diacylglycerol cysteine lipidation.

The protein belongs to the FlgH family. As to quaternary structure, the basal body constitutes a major portion of the flagellar organelle and consists of four rings (L,P,S, and M) mounted on a central rod.

It localises to the cell outer membrane. Its subcellular location is the bacterial flagellum basal body. Functionally, assembles around the rod to form the L-ring and probably protects the motor/basal body from shearing forces during rotation. The chain is Flagellar L-ring protein from Sulfurimonas denitrificans (strain ATCC 33889 / DSM 1251) (Thiomicrospira denitrificans (strain ATCC 33889 / DSM 1251)).